A 503-amino-acid chain; its full sequence is Transcription termination/antitermination protein NusA (503 aa).

In terms of domain architecture, S1 motif spans 140-206 (GELVIGVVKR…RGPQLLVSRT (67 aa)). Residues 308 to 374 (SHTMDIAVNK…FMEKLDVDEE (67 aa)) form the KH domain.

This sequence belongs to the NusA family. In terms of assembly, monomer. Binds directly to the core enzyme of the DNA-dependent RNA polymerase and to nascent RNA.

The protein resides in the cytoplasm. Participates in both transcription termination and antitermination. The sequence is that of Transcription termination/antitermination protein NusA from Coxiella burnetii (strain RSA 493 / Nine Mile phase I).